The following is a 213-amino-acid chain: Dimethylamine corrinoid protein 1 (213 aa).

Residues 1–90 (MSKEELLQEL…LMPEGSASSK (90 aa)) enclose the B12-binding N-terminal domain. A B12-binding domain is found at 91–213 (MGVIVNGTVE…AVAKAKELLA (123 aa)). H104 provides a ligand contact to methylcob(III)alamin.

Belongs to the methylamine corrinoid protein family.

It participates in one-carbon metabolism; methanogenesis from dimethylamine. Its function is as follows. Acts as a methyl group carrier between MtbB and MtbA. The chain is Dimethylamine corrinoid protein 1 (mtbC1) from Methanosarcina acetivorans (strain ATCC 35395 / DSM 2834 / JCM 12185 / C2A).